The sequence spans 124 residues: Small ribosomal subunit protein uS13 (124 aa).

Basic residues predominate over residues 92–117 (RRGLPVRGQRTKSNARTRKGPRKTVA). A disordered region spans residues 92–124 (RRGLPVRGQRTKSNARTRKGPRKTVANKKIESK).

This sequence belongs to the universal ribosomal protein uS13 family. In terms of assembly, part of the 30S ribosomal subunit. Forms a loose heterodimer with protein S19. Forms two bridges to the 50S subunit in the 70S ribosome.

Its function is as follows. Located at the top of the head of the 30S subunit, it contacts several helices of the 16S rRNA. In the 70S ribosome it contacts the 23S rRNA (bridge B1a) and protein L5 of the 50S subunit (bridge B1b), connecting the 2 subunits; these bridges are implicated in subunit movement. Contacts the tRNAs in the A and P-sites. This Mycoplasmoides gallisepticum (strain R(low / passage 15 / clone 2)) (Mycoplasma gallisepticum) protein is Small ribosomal subunit protein uS13.